The following is a 268-amino-acid chain: Peptide transport system ATP-binding protein SapF (268 aa).

The ABC transporter domain maps to 6–251 (LEVRNLSKTF…PLHELTRRLI (246 aa)). An ATP-binding site is contributed by 47–54 (GENGSGKS).

The protein belongs to the ABC transporter superfamily.

The protein resides in the cell inner membrane. In terms of biological role, involved in a peptide intake transport system that plays a role in the resistance to antimicrobial peptides. This chain is Peptide transport system ATP-binding protein SapF, found in Salmonella typhimurium (strain LT2 / SGSC1412 / ATCC 700720).